The primary structure comprises 232 residues: MAEDVKPTRKNLMAIDDRIQLSERGHDTLEQKRDGLIMEFMDILDQAQDVRSDLNANYETAQQKLNMARAMEGDVAVRGAAAALKEHPEITTRSKNIMGVVVPQIESSRVKKSLDQRGYGLLGSSARIDEAADAYEELIETIILAAEVETAMKKMLKEIETTKRRVNALEFKLLPDLYENKEYIEQKLEEQEREEIFRLKKIKNKKEAEEEDEDEDESEMTDETVVQTPADD.

Residues 200 to 232 (KKIKNKKEAEEEDEDEDESEMTDETVVQTPADD) are disordered. Residues 209–222 (EEEDEDEDESEMTD) show a composition bias toward acidic residues.

The protein belongs to the V-ATPase D subunit family. Has multiple subunits with at least A(3), B(3), C, D, E, F, H, I and proteolipid K(x).

The protein localises to the cell membrane. Its function is as follows. Component of the A-type ATP synthase that produces ATP from ADP in the presence of a proton gradient across the membrane. This Haloquadratum walsbyi (strain DSM 16790 / HBSQ001) protein is A-type ATP synthase subunit D.